Consider the following 435-residue polypeptide: Histidinol dehydrogenase (435 aa).

NAD(+) is bound by residues Tyr-131, Gln-189, and Asn-212. Substrate-binding residues include Ser-238, Gln-260, and His-263. Positions 260 and 263 each coordinate Zn(2+). Active-site proton acceptor residues include Glu-327 and His-328. Substrate is bound by residues His-328, Asp-361, Glu-415, and His-420. Asp-361 serves as a coordination point for Zn(2+). A Zn(2+)-binding site is contributed by His-420.

Belongs to the histidinol dehydrogenase family. In terms of assembly, homodimer. It depends on Zn(2+) as a cofactor.

It carries out the reaction L-histidinol + 2 NAD(+) + H2O = L-histidine + 2 NADH + 3 H(+). It participates in amino-acid biosynthesis; L-histidine biosynthesis; L-histidine from 5-phospho-alpha-D-ribose 1-diphosphate: step 9/9. Catalyzes the sequential NAD-dependent oxidations of L-histidinol to L-histidinaldehyde and then to L-histidine. This is Histidinol dehydrogenase (hisD) from Buchnera aphidicola subsp. Acyrthosiphon pisum (strain APS) (Acyrthosiphon pisum symbiotic bacterium).